The sequence spans 520 residues: GMP synthase [glutamine-hydrolyzing] (520 aa).

The Glutamine amidotransferase type-1 domain maps to 12–205; it reads KIIVLDYGSQ…AISICGARGD (194 aa). Cys89 (nucleophile) is an active-site residue. Residues His179 and Glu181 contribute to the active site. Residues 206–395 form the GMPS ATP-PPase domain; that stretch reads WSMDNFIDME…LGMPEEIVWR (190 aa). An ATP-binding site is contributed by 233 to 239; sequence SGGVDSS.

Homodimer.

It carries out the reaction XMP + L-glutamine + ATP + H2O = GMP + L-glutamate + AMP + diphosphate + 2 H(+). It participates in purine metabolism; GMP biosynthesis; GMP from XMP (L-Gln route): step 1/1. Its function is as follows. Catalyzes the synthesis of GMP from XMP. This is GMP synthase [glutamine-hydrolyzing] from Streptococcus pyogenes serotype M2 (strain MGAS10270).